The sequence spans 473 residues: Ribulose bisphosphate carboxylase large chain (473 aa).

The substrate site is built by asparagine 116 and threonine 166. The active-site Proton acceptor is lysine 168. Lysine 170 provides a ligand contact to substrate. 3 residues coordinate Mg(2+): lysine 194, aspartate 196, and glutamate 197. N6-carboxylysine is present on lysine 194. Catalysis depends on histidine 287, which acts as the Proton acceptor. Substrate-binding residues include arginine 288, histidine 320, and serine 372.

The protein belongs to the RuBisCO large chain family. Type I subfamily. Heterohexadecamer of 8 large chains and 8 small chains. It depends on Mg(2+) as a cofactor.

The catalysed reaction is 2 (2R)-3-phosphoglycerate + 2 H(+) = D-ribulose 1,5-bisphosphate + CO2 + H2O. The enzyme catalyses D-ribulose 1,5-bisphosphate + O2 = 2-phosphoglycolate + (2R)-3-phosphoglycerate + 2 H(+). Functionally, ruBisCO catalyzes two reactions: the carboxylation of D-ribulose 1,5-bisphosphate, the primary event in carbon dioxide fixation, as well as the oxidative fragmentation of the pentose substrate. Both reactions occur simultaneously and in competition at the same active site. This chain is Ribulose bisphosphate carboxylase large chain, found in Nitrosospira sp. (strain TCH716).